A 223-amino-acid polypeptide reads, in one-letter code: TAENPFTCPECGKRFSQKSNCWHTEDHTGEKPFTCMECSKSFTVKSSLLSHQRVHTGEKPYTCTQCNKQFSHSAQLRAHISTHTGVGPFPCTECSKTFSLKHKLYKHQRIHTGEKPFQCLECGKSFSVKHGLLKHQRSHTGEKPYACSECQKTFAHKTTLMVHERIHTGERPYECNDCGKRFIHSTNLNCHQKIHSGEKPFTCTECGKSFSLKNKLVRHQKIH.

8 C2H2-type zinc fingers span residues 6–27 (FTCP…TEDH), 33–55 (FTCM…QRVH), 61–83 (YTCT…ISTH), 89–111 (FPCT…QRIH), 117–139 (FQCL…QRSH), 145–167 (YACS…ERIH), 173–195 (YECN…QKIH), and 201–223 (FTCT…QKIH).

Belongs to the krueppel C2H2-type zinc-finger protein family.

The protein localises to the nucleus. May be involved in transcriptional regulation. The protein is Gastrula zinc finger protein XlCGF52.1 of Xenopus laevis (African clawed frog).